Here is a 452-residue protein sequence, read N- to C-terminus: BUB3-interacting and GLEBS motif-containing protein ZNF207 (452 aa).

The microtubule-binding region stretch occupies residues 1–92 (MGRKKKKQLK…EGIPEKDMEE (92 aa)). C2H2-type zinc fingers lie at residues 11–34 (PWCW…KAKH) and 35–58 (FKCH…MQVH). 2 disordered regions span residues 99–131 (QKTQ…SFQQ) and 298–330 (STMS…TSAT). A compositionally biased stretch (acidic residues) spans 113–123 (DDSDYDDDDDT). Residues 329–361 (ATSKLVHPDEDISLEEKRAQLPKYQRNLPRPGQ) are GLEBS.

In terms of assembly, interacts (via GLEBS region) with bub3.

The protein resides in the nucleus. Its subcellular location is the chromosome. It is found in the centromere. The protein localises to the kinetochore. It localises to the cytoplasm. The protein resides in the cytoskeleton. Its subcellular location is the spindle. Functionally, kinetochore- and microtubule-binding protein that plays a key role in spindle assembly. Znf207/BuGZ is mainly composed of disordered low-complexity regions and undergoes phase transition or coacervation to form temperature-dependent liquid droplets. Coacervation promotes microtubule bundling and concentrates tubulin, promoting microtubule polymerization and assembly of spindle and spindle matrix by concentrating its building blocks. The protein is BUB3-interacting and GLEBS motif-containing protein ZNF207 of Xenopus laevis (African clawed frog).